Here is a 145-residue protein sequence, read N- to C-terminus: Histone H2B.1, sperm (145 aa).

The interval 1 to 52 is disordered; the sequence is MPSQKSPTKRSPTKRSPTKRSPQKGGKGGKGAKRGGKAGKRRRGVQVKRRRR. 4 short sequence motifs (SPKK motif) span residues 6-9, 11-14, 16-19, and 21-24; these read SPTK and SPQK. Composition is skewed to basic residues over residues 7 to 22 and 30 to 52; these read PTKRSPTKRSPTKRSP and KGAKRGGKAGKRRRGVQVKRRRR. Phosphoserine is present on residues S16 and S21. O-linked (GlcNAc) serine glycosylation occurs at S132. A Glycyl lysine isopeptide (Lys-Gly) (interchain with G-Cter in ubiquitin) cross-link involves residue K140.

It belongs to the histone H2B family. The nucleosome is a histone octamer containing two molecules each of H2A, H2B, H3 and H4 assembled in one H3-H4 heterotetramer and two H2A-H2B heterodimers. The octamer wraps approximately 147 bp of DNA. In terms of processing, monoubiquitination of Lys-140 gives a specific tag for epigenetic transcriptional activation and is also prerequisite for histone H3 'Lys-4' and 'Lys-79' methylation. Post-translationally, phosphorylated on SPKK motifs 3 and 4; which may regulate DNA binding. Dephosphorylated during maturation of spermatids to mature sperm and rephosphorylated at fertilization. GlcNAcylation at Ser-132 promotes monoubiquitination of Lys-140. It fluctuates in response to extracellular glucose, and associates with transcribed genes.

The protein localises to the nucleus. Its subcellular location is the chromosome. In terms of biological role, core component of nucleosome. Nucleosomes wrap and compact DNA into chromatin, limiting DNA accessibility to the cellular machineries which require DNA as a template. Histones thereby play a central role in transcription regulation, DNA repair, DNA replication and chromosomal stability. DNA accessibility is regulated via a complex set of post-translational modifications of histones, also called histone code, and nucleosome remodeling. The sequence is that of Histone H2B.1, sperm from Parechinus angulosus (Angulate sea urchin).